Consider the following 195-residue polypeptide: Glycerol-3-phosphate acyltransferase (195 aa).

6 consecutive transmembrane segments (helical) span residues 2–22, 54–74, 80–100, 107–127, 132–152, and 155–175; these read IFFS…SSAI, IAIS…WLGY, PIFL…PIFF, GVAT…IVMI, LTVL…FIIP, and AWHF…LVVI.

It belongs to the PlsY family. In terms of assembly, probably interacts with PlsX.

It localises to the cell inner membrane. The enzyme catalyses an acyl phosphate + sn-glycerol 3-phosphate = a 1-acyl-sn-glycero-3-phosphate + phosphate. It functions in the pathway lipid metabolism; phospholipid metabolism. Functionally, catalyzes the transfer of an acyl group from acyl-phosphate (acyl-PO(4)) to glycerol-3-phosphate (G3P) to form lysophosphatidic acid (LPA). This enzyme utilizes acyl-phosphate as fatty acyl donor, but not acyl-CoA or acyl-ACP. This is Glycerol-3-phosphate acyltransferase from Blochmanniella pennsylvanica (strain BPEN).